A 288-amino-acid polypeptide reads, in one-letter code: Energy-coupling factor transporter ATP-binding protein EcfA2 (288 aa).

The region spanning isoleucine 3–serine 246 is the ABC transporter domain. Glycine 40 to serine 47 is a binding site for ATP.

It belongs to the ABC transporter superfamily. Energy-coupling factor EcfA family. In terms of assembly, forms a stable energy-coupling factor (ECF) transporter complex composed of 2 membrane-embedded substrate-binding proteins (S component), 2 ATP-binding proteins (A component) and 2 transmembrane proteins (T component).

Its subcellular location is the cell membrane. ATP-binding (A) component of a common energy-coupling factor (ECF) ABC-transporter complex. Unlike classic ABC transporters this ECF transporter provides the energy necessary to transport a number of different substrates. The chain is Energy-coupling factor transporter ATP-binding protein EcfA2 from Listeria monocytogenes serotype 4b (strain F2365).